Consider the following 183-residue polypeptide: Adenine phosphoribosyltransferase (183 aa).

Belongs to the purine/pyrimidine phosphoribosyltransferase family. In terms of assembly, homodimer.

The protein localises to the cytoplasm. It catalyses the reaction AMP + diphosphate = 5-phospho-alpha-D-ribose 1-diphosphate + adenine. Its pathway is purine metabolism; AMP biosynthesis via salvage pathway; AMP from adenine: step 1/1. In terms of biological role, catalyzes a salvage reaction resulting in the formation of AMP, that is energically less costly than de novo synthesis. The polypeptide is Adenine phosphoribosyltransferase (Salmonella paratyphi C (strain RKS4594)).